A 197-amino-acid polypeptide reads, in one-letter code: Peptide deformylase (197 aa).

Residues Cys106 and His148 each contribute to the Fe cation site. Glu149 is an active-site residue. Fe cation is bound at residue His152.

Belongs to the polypeptide deformylase family. It depends on Fe(2+) as a cofactor.

The catalysed reaction is N-terminal N-formyl-L-methionyl-[peptide] + H2O = N-terminal L-methionyl-[peptide] + formate. Removes the formyl group from the N-terminal Met of newly synthesized proteins. Requires at least a dipeptide for an efficient rate of reaction. N-terminal L-methionine is a prerequisite for activity but the enzyme has broad specificity at other positions. The chain is Peptide deformylase from Mycolicibacterium paratuberculosis (strain ATCC BAA-968 / K-10) (Mycobacterium paratuberculosis).